An 878-amino-acid chain; its full sequence is Phosphoenolpyruvate carboxylase (878 aa).

Residues His-138 and Lys-545 contribute to the active site.

It belongs to the PEPCase type 1 family. It depends on Mg(2+) as a cofactor.

It carries out the reaction oxaloacetate + phosphate = phosphoenolpyruvate + hydrogencarbonate. Its function is as follows. Forms oxaloacetate, a four-carbon dicarboxylic acid source for the tricarboxylic acid cycle. This chain is Phosphoenolpyruvate carboxylase, found in Shewanella loihica (strain ATCC BAA-1088 / PV-4).